Consider the following 151-residue polypeptide: Gametocyte-specific factor 1-like (151 aa).

2 consecutive CHHC U11-48K-type zinc fingers follow at residues 6 to 33 and 40 to 67; these read IEIC…RKKN and MASC…VNRS. Zn(2+)-binding residues include C9, H15, H25, C29, C43, H49, H59, and C63. A disordered region spans residues 130 to 151; sequence QESRGGDQCPEDPQTRTRKANF.

Belongs to the UPF0224 (FAM112) family.

This Mus musculus (Mouse) protein is Gametocyte-specific factor 1-like (Gtsf1l).